The chain runs to 126 residues: Glycine cleavage system H protein (126 aa).

In terms of domain architecture, Lipoyl-binding spans 21–103 (TVTIGISEHA…YDGGWIVKVK (83 aa)). The residue at position 62 (Lys62) is an N6-lipoyllysine.

Belongs to the GcvH family. In terms of assembly, the glycine cleavage system is composed of four proteins: P, T, L and H. (R)-lipoate serves as cofactor.

Its function is as follows. The glycine cleavage system catalyzes the degradation of glycine. The H protein shuttles the methylamine group of glycine from the P protein to the T protein. This chain is Glycine cleavage system H protein, found in Vibrio cholerae serotype O1 (strain ATCC 39541 / Classical Ogawa 395 / O395).